A 656-amino-acid chain; its full sequence is Spermatogenesis-associated protein 13 (656 aa).

Polar residues predominate over residues 1-12; it reads MHPASVTTTSQD. The disordered stretch occupies residues 1 to 26; the sequence is MHPASVTTTSQDPCAPSGSCRGGRRR. Ser82 carries the post-translational modification Phosphoserine. Residues 85–115 are disordered; it reads IGLDRVGRRRQMKTSNVSSDGGAESSALVDD. Residues 102–154 are ABR (APC-binding region) domain; the sequence is SSDGGAESSALVDDNGSEEDFSYEELCQANPRYLQPGGEQLAINELISDGSVV. Ser118 carries the phosphoserine modification. An SH3 domain is found at 151–210; sequence GSVVCAEALWDHVTMDDQELGFKAGDVIQVLEASNKDWWWGRNEDKEAWFPASFVRLRVN. Residues 215–242 are disordered; sequence PENCSSSHGEEQDEDTSKARHKHPESQQ. One can recognise a DH domain in the interval 244–428; that stretch reads MRTNVIQEIM…KNVACLINER (185 aa). Residues 459–565 enclose the PH domain; that stretch reads ELIHSGELTK…WLQAYADERR (107 aa). Residues 565 to 656 form a C-terminal tail region; it reads RRVQEDQQMG…TFHKLTPFRK (92 aa).

Interacts (via ABR and SH3 domain) with APC. The binding of APC enhances its GEF activity by relieving it from an autoinhibitory conformation, in which the ABR and SH3 domains are associated with the C-terminal tail. Interacts (via C-terminal tail) with PPP1R9B (via C-terminus). Interacts with RAC1. Expression is aberrantly enhanced in most colorectal tumors.

Its subcellular location is the cytoplasm. The protein localises to the cell projection. The protein resides in the filopodium. It is found in the lamellipodium. It localises to the ruffle membrane. Its subcellular location is the podosome. Its activity is regulated as follows. Both the ABR and the SH3 domains contribute to maintaining the protein in an inhibited conformation by associating with the C-terminal tail. Binding of these domains to the C-terminal tail inhibits the activity of the protein by blocking a region that is required for its GEF activity. In terms of biological role, acts as a guanine nucleotide exchange factor (GEF) for RHOA, RAC1 and CDC42 GTPases. Regulates cell migration and adhesion assembly and disassembly through a RAC1, PI3K, RHOA and AKT1-dependent mechanism. Increases both RAC1 and CDC42 activity, but decreases the amount of active RHOA. Required for MMP9 up-regulation via the JNK signaling pathway in colorectal tumor cells. Involved in tumor angiogenesis and may play a role in intestinal adenoma formation and tumor progression. This Mus musculus (Mouse) protein is Spermatogenesis-associated protein 13 (Spata13).